The chain runs to 404 residues: Ubiquitin-like modifier-activating enzyme 5 (404 aa).

Residues Gly-83, Asp-104, Lys-127, Asn-150, and Asn-184 each contribute to the ATP site. Residues Cys-226 and Cys-229 each contribute to the Zn(2+) site. Catalysis depends on Cys-250, which acts as the Glycyl thioester intermediate. Zn(2+)-binding residues include Cys-303 and Cys-308. The disordered stretch occupies residues 372-404 (APEKSSETSEETVSAATADETSLEDLMAQMKSM). Over residues 382–391 (ETVSAATADE) the composition is skewed to low complexity.

It belongs to the ubiquitin-activating E1 family. UBA5 subfamily. In terms of assembly, interacts (via C-terminus) with Ufc1. Interacts with Ufm1.

Its subcellular location is the cytoplasm. The protein localises to the nucleus. It is found in the golgi apparatus. E1-like enzyme which activates UFM1. This chain is Ubiquitin-like modifier-activating enzyme 5, found in Drosophila melanogaster (Fruit fly).